Consider the following 246-residue polypeptide: 5'-nucleotidase SurE (246 aa).

The a divalent metal cation site is built by aspartate 8, aspartate 9, serine 39, and asparagine 91.

This sequence belongs to the SurE nucleotidase family. Requires a divalent metal cation as cofactor.

The protein localises to the cytoplasm. It carries out the reaction a ribonucleoside 5'-phosphate + H2O = a ribonucleoside + phosphate. In terms of biological role, nucleotidase that shows phosphatase activity on nucleoside 5'-monophosphates. This is 5'-nucleotidase SurE from Mannheimia succiniciproducens (strain KCTC 0769BP / MBEL55E).